Consider the following 574-residue polypeptide: 2-succinyl-5-enolpyruvyl-6-hydroxy-3-cyclohexene-1-carboxylate synthase (574 aa).

It belongs to the TPP enzyme family. MenD subfamily. Homodimer. It depends on Mg(2+) as a cofactor. Requires Mn(2+) as cofactor. The cofactor is thiamine diphosphate.

It carries out the reaction isochorismate + 2-oxoglutarate + H(+) = 5-enolpyruvoyl-6-hydroxy-2-succinyl-cyclohex-3-ene-1-carboxylate + CO2. The protein operates within quinol/quinone metabolism; 1,4-dihydroxy-2-naphthoate biosynthesis; 1,4-dihydroxy-2-naphthoate from chorismate: step 2/7. It participates in cofactor biosynthesis; phylloquinone biosynthesis. In terms of biological role, catalyzes the thiamine diphosphate-dependent decarboxylation of 2-oxoglutarate and the subsequent addition of the resulting succinic semialdehyde-thiamine pyrophosphate anion to isochorismate to yield 2-succinyl-5-enolpyruvyl-6-hydroxy-3-cyclohexene-1-carboxylate (SEPHCHC). The protein is 2-succinyl-5-enolpyruvyl-6-hydroxy-3-cyclohexene-1-carboxylate synthase of Prochlorococcus marinus (strain SARG / CCMP1375 / SS120).